The primary structure comprises 156 residues: Ribosome maturation factor RimP (156 aa).

The protein belongs to the RimP family.

The protein resides in the cytoplasm. Its function is as follows. Required for maturation of 30S ribosomal subunits. This is Ribosome maturation factor RimP from Bacillus thuringiensis (strain Al Hakam).